The sequence spans 151 residues: Class I hydrophobin A (151 aa).

The first 17 residues, 1–17, serve as a signal peptide directing secretion; it reads MQFSVAAVLALATAVAA. 4 disulfides stabilise this stretch: cysteine 52–cysteine 125, cysteine 60–cysteine 119, cysteine 61–cysteine 101, and cysteine 126–cysteine 144.

This sequence belongs to the fungal hydrophobin family. In terms of assembly, interacts with cutinase cutL1 in a pH-dependent manner. Self-assembles to form functional amyloid fibrils called rodlets. Self-assembly into fibrillar rodlets occurs spontaneously at hydrophobic:hydrophilic interfaces and the rodlets further associate laterally to form amphipathic monolayers. rolA rodlet formation is regulated by the strength of ionic interactions between rolA molecules. Three types of self-assembled structures of rolA are observed: spherical, rod-like, and mesh-like.

Its subcellular location is the secreted. It is found in the cell wall. Its function is as follows. Aerial growth, conidiation, and dispersal of filamentous fungi in the environment rely upon a capability of their secreting small amphipathic proteins called hydrophobins (HPBs) with low sequence identity. Class I can self-assemble into an outermost layer of rodlet bundles on aerial cell surfaces, conferring cellular hydrophobicity that supports fungal growth, development and dispersal; whereas Class II form highly ordered films at water-air interfaces through intermolecular interactions but contribute nothing to the rodlet structure. RolA is a class I hydrophobin that undergoes a conformational change after its adsorption to hydrophobic surfaces such as the biodegradable polyester polybutylene succinate-coadipate (PBSA) and recruits the cutinase cutL1, resulting in condensation of cutL1 on the PBSA surface and consequent stimulation of PBSA hydrolysis. Increases also the activity of polyethylene terephthalate hydrolase (PETase) that hydrolyzes polyethylene terephthalate (PET), one of the most well-known polyesters that is widely used as packaging material, when the PET samples are preincubated with the hydrophobin. The wetting effect of rolA probably acts on PET surface to become hydrophilic, which leads PETase easier to contact and attack the surface. This is Class I hydrophobin A from Aspergillus oryzae (strain ATCC 42149 / RIB 40) (Yellow koji mold).